A 215-amino-acid chain; its full sequence is MRLLFFGPPGAGKGTQAKKVAQEFQIVHISTGDILRDAVSKGTELGKMAKAIMDRGELVSDEIMNSLVKERLEELDSFILDGYPRTLDQAKFLDQATKELQKEIDAAVLIDVSEEEIVKRISNRRVCPNCGKVYNLITLQPKEDEKCDVCGTKLIQRDDDKEEVVRERYKVYKKNTEPVIEYYRKNNKIITIDGAQNVEDVTKELFNILRSFNKQ.

10-15 (GAGKGT) serves as a coordination point for ATP. An NMP region spans residues 30–59 (STGDILRDAVSKGTELGKMAKAIMDRGELV). Residues T31, R36, 57 to 59 (ELV), 82 to 85 (GYPR), and Q89 contribute to the AMP site. The tract at residues 123 to 160 (NRRVCPNCGKVYNLITLQPKEDEKCDVCGTKLIQRDDD) is LID. R124 is a binding site for ATP. 2 residues coordinate Zn(2+): C127 and C130. ATP is bound at residue 133–134 (VY). Zn(2+) contacts are provided by C147 and C150. R157 and R168 together coordinate AMP. Residue Q196 participates in ATP binding.

It belongs to the adenylate kinase family. In terms of assembly, monomer.

It localises to the cytoplasm. The enzyme catalyses AMP + ATP = 2 ADP. Its pathway is purine metabolism; AMP biosynthesis via salvage pathway; AMP from ADP: step 1/1. Its function is as follows. Catalyzes the reversible transfer of the terminal phosphate group between ATP and AMP. Plays an important role in cellular energy homeostasis and in adenine nucleotide metabolism. The chain is Adenylate kinase from Petrotoga mobilis (strain DSM 10674 / SJ95).